The following is a 266-amino-acid chain: Dihydropteroate synthase (266 aa).

The Pterin-binding domain occupies 12–260 (AAIMGILNVT…DVKANQDIVA (249 aa)). Mg(2+) is bound at residue asparagine 19. Residues threonine 59, aspartate 93, asparagine 112, aspartate 176, lysine 212, and 248 to 250 (RVH) each bind (7,8-dihydropterin-6-yl)methyl diphosphate.

Belongs to the DHPS family. As to quaternary structure, homodimer or homotrimer. The cofactor is Mg(2+).

It carries out the reaction (7,8-dihydropterin-6-yl)methyl diphosphate + 4-aminobenzoate = 7,8-dihydropteroate + diphosphate. Its pathway is cofactor biosynthesis; tetrahydrofolate biosynthesis; 7,8-dihydrofolate from 2-amino-4-hydroxy-6-hydroxymethyl-7,8-dihydropteridine diphosphate and 4-aminobenzoate: step 1/2. Catalyzes the condensation of para-aminobenzoate (pABA) with 6-hydroxymethyl-7,8-dihydropterin diphosphate (DHPt-PP) to form 7,8-dihydropteroate (H2Pte), the immediate precursor of folate derivatives. This Streptococcus pyogenes serotype M18 (strain MGAS8232) protein is Dihydropteroate synthase (folP).